The primary structure comprises 204 residues: Large ribosomal subunit protein eL15 (204 aa).

Belongs to the eukaryotic ribosomal protein eL15 family.

The protein is Large ribosomal subunit protein eL15 (RPL15) of Tetrahymena thermophila (strain SB210).